A 98-amino-acid chain; its full sequence is Large ribosomal subunit protein uL23 (98 aa).

Belongs to the universal ribosomal protein uL23 family. In terms of assembly, part of the 50S ribosomal subunit. Contacts protein L29, and trigger factor when it is bound to the ribosome.

In terms of biological role, one of the early assembly proteins it binds 23S rRNA. One of the proteins that surrounds the polypeptide exit tunnel on the outside of the ribosome. Forms the main docking site for trigger factor binding to the ribosome. The polypeptide is Large ribosomal subunit protein uL23 (Rickettsia felis (strain ATCC VR-1525 / URRWXCal2) (Rickettsia azadi)).